Reading from the N-terminus, the 457-residue chain is Metacaspase-1 (457 aa).

The segment at 1–149 (MSWNQYPGGG…PQLQGQGGQS (149 aa)) is disordered. Residues 7–18 (PGGGHHQQGGYG) are compositionally biased toward gly residues. The segment covering 20–56 (RPPPPQWAQQGPPPPPNMGYRPPPPPQAYYNNPPPPQ) has biased composition (pro residues). Positions 57–83 (QYQRPAPQQNGYQQGGYQQQQQSQGNY) are enriched in low complexity. Residues histidine 247 and cysteine 303 contribute to the active site.

The protein belongs to the peptidase C14B family.

Functionally, involved in cell death (apoptosis). The chain is Metacaspase-1 (MCA1) from Cryptococcus neoformans var. neoformans serotype D (strain JEC21 / ATCC MYA-565) (Filobasidiella neoformans).